Reading from the N-terminus, the 172-residue chain is Protein CapG (172 aa).

The protein belongs to the transferase hexapeptide repeat family.

It participates in capsule biogenesis; capsule polysaccharide biosynthesis. Functionally, required for the biosynthesis of type 1 capsular polysaccharide. In Staphylococcus aureus, this protein is Protein CapG (capG).